Here is a 341-residue protein sequence, read N- to C-terminus: Ferredoxin--NADP reductase 2 (341 aa).

FAD contacts are provided by Asp42, Gln50, Tyr55, Ile95, Phe129, Asp294, and Ser335.

The protein belongs to the ferredoxin--NADP reductase type 2 family. In terms of assembly, homodimer. The cofactor is FAD.

It carries out the reaction 2 reduced [2Fe-2S]-[ferredoxin] + NADP(+) + H(+) = 2 oxidized [2Fe-2S]-[ferredoxin] + NADPH. This chain is Ferredoxin--NADP reductase 2, found in Chloroherpeton thalassium (strain ATCC 35110 / GB-78).